The following is a 101-amino-acid chain: Putative pterin-4-alpha-carbinolamine dehydratase (101 aa).

Belongs to the pterin-4-alpha-carbinolamine dehydratase family.

It catalyses the reaction (4aS,6R)-4a-hydroxy-L-erythro-5,6,7,8-tetrahydrobiopterin = (6R)-L-erythro-6,7-dihydrobiopterin + H2O. The chain is Putative pterin-4-alpha-carbinolamine dehydratase (phhB) from Ralstonia nicotianae (strain ATCC BAA-1114 / GMI1000) (Ralstonia solanacearum).